The sequence spans 448 residues: Tubulin alpha chain (448 aa).

Residues glutamine 12, glutamate 73, serine 142, glycine 146, threonine 147, threonine 181, asparagine 208, and asparagine 230 each coordinate GTP. Mg(2+) is bound at residue glutamate 73. Glutamate 256 is an active-site residue.

Belongs to the tubulin family. Dimer of alpha and beta chains. A typical microtubule is a hollow water-filled tube with an outer diameter of 25 nm and an inner diameter of 15 nM. Alpha-beta heterodimers associate head-to-tail to form protofilaments running lengthwise along the microtubule wall with the beta-tubulin subunit facing the microtubule plus end conferring a structural polarity. Microtubules usually have 13 protofilaments but different protofilament numbers can be found in some organisms and specialized cells. Mg(2+) is required as a cofactor.

It localises to the cytoplasm. The protein localises to the cytoskeleton. It catalyses the reaction GTP + H2O = GDP + phosphate + H(+). In terms of biological role, tubulin is the major constituent of microtubules, a cylinder consisting of laterally associated linear protofilaments composed of alpha- and beta-tubulin heterodimers. Microtubules grow by the addition of GTP-tubulin dimers to the microtubule end, where a stabilizing cap forms. Below the cap, tubulin dimers are in GDP-bound state, owing to GTPase activity of alpha-tubulin. This is Tubulin alpha chain (TUB1) from Eremothecium gossypii (strain ATCC 10895 / CBS 109.51 / FGSC 9923 / NRRL Y-1056) (Yeast).